Reading from the N-terminus, the 491-residue chain is Meiosis-specific nuclear structural protein 1 (491 aa).

Residues 1–314 (MATKKRALSF…QLEETLRQRD (314 aa)) form an interaction with BBOF1 region. Coiled coils occupy residues 29 to 253 (QVMN…RAQD) and 287 to 410 (RVHE…AVEK). Tyrosine 188 is subject to Phosphotyrosine.

Belongs to the MNS1 family. In terms of assembly, able to form oligomers. Microtubule inner protein component of sperm flagellar doublet microtubules. Interacts with ODAD1. Interacts with BBOF1. In terms of tissue distribution, high expression in testis. Expressed in pachytene spermatocytes and post-meiotic spermatids.

Its subcellular location is the nucleus. It localises to the cytoplasm. The protein resides in the cytoskeleton. The protein localises to the flagellum axoneme. It is found in the cilium axoneme. Microtubule inner protein (MIP) part of the dynein-decorated doublet microtubules (DMTs) in cilia axoneme, which is required for motile cilia beating. May play a role in the control of meiotic division and germ cell differentiation through regulation of pairing and recombination during meiosis. Required for sperm flagella assembly. May play a role in the assembly and function of the outer dynein arm-docking complex (ODA-DC). ODA-DC mediates outer dynein arms (ODA) binding onto the axonemal doublet microtubules. The polypeptide is Meiosis-specific nuclear structural protein 1 (Mns1) (Mus musculus (Mouse)).